The following is a 274-amino-acid chain: NAD(P)H dehydrogenase [quinone] 1 (274 aa).

Residues His-12, 18-19 (FN), and Gln-67 contribute to the FAD site. Ser-82 carries the post-translational modification Phosphoserine. Residue 104 to 107 (LQWF) participates in FAD binding. Position 126-128 (126-128 (AYT)) interacts with substrate. FAD is bound by residues 148–151 (TTGG), Tyr-156, and Arg-201. The important for apoenzyme conformational stability stretch occupies residues 225–274 (PSSLFDLNFQAGFLMKKEVQDEEKNKKFGLSVGHHLGKSIPTDNQIKARK). Glycyl lysine isopeptide (Lys-Gly) (interchain with G-Cter in SUMO2) cross-links involve residues Lys-250 and Lys-251.

Belongs to the NAD(P)H dehydrogenase (quinone) family. Homodimer. Interacts with PDLIM4 isoform 2; this interaction stabilizes PDLIM4 isoform 2 in response to oxidative stress and protects it from ubiquitin-independent degradation by the core 20S proteasome. Interacts with TP73 (via SAM domain); this interaction is NADH-dependent, stabilizes TP73 in response to oxidative stress and protects it from ubiquitin-independent degradation by the 20S proteasome. Interacts with TP53; this interaction is NADH-dependent, stabilizes TP53 in response to oxidative stress and protects it from ubiquitin-independent degradation by the 20S proteasome. It depends on FAD as a cofactor.

It is found in the cytoplasm. It localises to the cytosol. The enzyme catalyses a quinone + NADH + H(+) = a quinol + NAD(+). It catalyses the reaction a quinone + NADPH + H(+) = a quinol + NADP(+). The catalysed reaction is ubiquinone-10 + NADH + H(+) = ubiquinol-10 + NAD(+). It carries out the reaction menadione + NADH + H(+) = menadiol + NAD(+). Flavin-containing quinone reductase that catalyzes two-electron reduction of quinones to hydroquinones using either NADH or NADPH as electron donors. In a ping-pong kinetic mechanism, the electrons are sequentially transferred from NAD(P)H to flavin cofactor and then from reduced flavin to the quinone, bypassing the formation of semiquinone and reactive oxygen species. Regulates cellular redox state primarily through quinone detoxification. Reduces components of plasma membrane redox system such as coenzyme Q and vitamin quinones, producing antioxidant hydroquinone forms. In the process may function as superoxide scavenger to prevent hydroquinone oxidation and facilitate excretion. Alternatively, can activate quinones and their derivatives by generating redox reactive hydroquinones with DNA cross-linking antitumor potential. Acts as a gatekeeper of the core 20S proteasome known to degrade proteins with unstructured regions. Upon oxidative stress, interacts with tumor suppressors TP53 and TP73 in a NADH-dependent way and inhibits their ubiquitin-independent degradation by the 20S proteasome. This chain is NAD(P)H dehydrogenase [quinone] 1 (NQO1), found in Pongo abelii (Sumatran orangutan).